A 211-amino-acid polypeptide reads, in one-letter code: ATP phosphoribosyltransferase (211 aa).

It belongs to the ATP phosphoribosyltransferase family. Short subfamily. As to quaternary structure, heteromultimer composed of HisG and HisZ subunits.

The protein resides in the cytoplasm. It catalyses the reaction 1-(5-phospho-beta-D-ribosyl)-ATP + diphosphate = 5-phospho-alpha-D-ribose 1-diphosphate + ATP. The protein operates within amino-acid biosynthesis; L-histidine biosynthesis; L-histidine from 5-phospho-alpha-D-ribose 1-diphosphate: step 1/9. In terms of biological role, catalyzes the condensation of ATP and 5-phosphoribose 1-diphosphate to form N'-(5'-phosphoribosyl)-ATP (PR-ATP). Has a crucial role in the pathway because the rate of histidine biosynthesis seems to be controlled primarily by regulation of HisG enzymatic activity. The protein is ATP phosphoribosyltransferase of Bacillus cereus (strain AH187).